We begin with the raw amino-acid sequence, 229 residues long: Large ribosomal subunit protein uL1 (229 aa).

Belongs to the universal ribosomal protein uL1 family. As to quaternary structure, part of the 50S ribosomal subunit.

Binds directly to 23S rRNA. The L1 stalk is quite mobile in the ribosome, and is involved in E site tRNA release. Its function is as follows. Protein L1 is also a translational repressor protein, it controls the translation of the L11 operon by binding to its mRNA. This Actinobacillus pleuropneumoniae serotype 3 (strain JL03) protein is Large ribosomal subunit protein uL1.